We begin with the raw amino-acid sequence, 351 residues long: Nicotinate-nucleotide--dimethylbenzimidazole phosphoribosyltransferase (351 aa).

E317 functions as the Proton acceptor in the catalytic mechanism.

Belongs to the CobT family.

It carries out the reaction 5,6-dimethylbenzimidazole + nicotinate beta-D-ribonucleotide = alpha-ribazole 5'-phosphate + nicotinate + H(+). The protein operates within nucleoside biosynthesis; alpha-ribazole biosynthesis; alpha-ribazole from 5,6-dimethylbenzimidazole: step 1/2. Its function is as follows. Catalyzes the synthesis of alpha-ribazole-5'-phosphate from nicotinate mononucleotide (NAMN) and 5,6-dimethylbenzimidazole (DMB). The polypeptide is Nicotinate-nucleotide--dimethylbenzimidazole phosphoribosyltransferase (Pseudomonas putida (strain GB-1)).